We begin with the raw amino-acid sequence, 96 residues long: Protein Vpr (96 aa).

The homooligomerization stretch occupies residues 1 to 42 (MEQAPEDQGPQREPYNQWALELLEELKNEAVRHFPRIWLHGL). Residues S79, S94, and S96 each carry the phosphoserine; by host modification.

The protein belongs to the HIV-1 VPR protein family. Homooligomer, may form homodimer. Interacts with p6-gag region of the Pr55 Gag precursor protein through a (Leu-X-X)4 motif near the C-terminus of the P6gag protein. Interacts with host UNG. May interact with host RAD23A/HHR23A. Interacts with host VPRBP/DCAF1, leading to hijack the CUL4A-RBX1-DDB1-DCAF1/VPRBP complex, mediating ubiquitination of host proteins such as TERT and ZGPAT and arrest of the cell cycle in G2 phase. In terms of processing, phosphorylated on several residues by host. These phosphorylations regulate VPR activity for the nuclear import of the HIV-1 pre-integration complex.

It localises to the virion. Its subcellular location is the host nucleus. The protein resides in the host extracellular space. Functionally, during virus replication, may deplete host UNG protein, and incude G2-M cell cycle arrest. Acts by targeting specific host proteins for degradation by the 26S proteasome, through association with the cellular CUL4A-DDB1 E3 ligase complex by direct interaction with host VPRPB/DCAF-1. Cell cycle arrest reportedly occurs within hours of infection and is not blocked by antiviral agents, suggesting that it is initiated by the VPR carried into the virion. Additionally, VPR induces apoptosis in a cell cycle dependent manner suggesting that these two effects are mechanistically linked. Detected in the serum and cerebrospinal fluid of AIDS patient, VPR may also induce cell death to bystander cells. Its function is as follows. During virus entry, plays a role in the transport of the viral pre-integration (PIC) complex to the host nucleus. This function is crucial for viral infection of non-dividing macrophages. May act directly at the nuclear pore complex, by binding nucleoporins phenylalanine-glycine (FG)-repeat regions. The chain is Protein Vpr from Human immunodeficiency virus type 1 group M subtype B (isolate MN) (HIV-1).